Reading from the N-terminus, the 166-residue chain is Large ribosomal subunit protein uL10 (166 aa).

Belongs to the universal ribosomal protein uL10 family. Part of the ribosomal stalk of the 50S ribosomal subunit. The N-terminus interacts with L11 and the large rRNA to form the base of the stalk. The C-terminus forms an elongated spine to which L12 dimers bind in a sequential fashion forming a multimeric L10(L12)X complex.

In terms of biological role, forms part of the ribosomal stalk, playing a central role in the interaction of the ribosome with GTP-bound translation factors. The chain is Large ribosomal subunit protein uL10 from Staphylococcus carnosus (strain TM300).